The following is a 227-amino-acid chain: Lipoprotein-releasing system ATP-binding protein LolD (227 aa).

In terms of domain architecture, ABC transporter spans 7–227 (LRLERIGRAY…TLKDGRVVDL (221 aa)). 43-50 (APSGAGKS) lines the ATP pocket.

The protein belongs to the ABC transporter superfamily. Lipoprotein translocase (TC 3.A.1.125) family. The complex is composed of two ATP-binding proteins (LolD) and two transmembrane proteins (LolC and LolE).

Its subcellular location is the cell inner membrane. Part of the ABC transporter complex LolCDE involved in the translocation of mature outer membrane-directed lipoproteins, from the inner membrane to the periplasmic chaperone, LolA. Responsible for the formation of the LolA-lipoprotein complex in an ATP-dependent manner. In Brucella abortus biovar 1 (strain 9-941), this protein is Lipoprotein-releasing system ATP-binding protein LolD.